The sequence spans 643 residues: Fructose-1,6-bisphosphatase class 3 (643 aa).

The protein belongs to the FBPase class 3 family. It depends on Mn(2+) as a cofactor.

It catalyses the reaction beta-D-fructose 1,6-bisphosphate + H2O = beta-D-fructose 6-phosphate + phosphate. It functions in the pathway carbohydrate biosynthesis; gluconeogenesis. This Streptococcus agalactiae serotype Ia (strain ATCC 27591 / A909 / CDC SS700) protein is Fructose-1,6-bisphosphatase class 3.